The chain runs to 302 residues: Glycine--tRNA ligase alpha subunit (302 aa).

This sequence belongs to the class-II aminoacyl-tRNA synthetase family. As to quaternary structure, tetramer of two alpha and two beta subunits.

It is found in the cytoplasm. The catalysed reaction is tRNA(Gly) + glycine + ATP = glycyl-tRNA(Gly) + AMP + diphosphate. The protein is Glycine--tRNA ligase alpha subunit of Enterococcus faecalis (strain ATCC 700802 / V583).